The following is a 206-amino-acid chain: Thymidylate kinase (206 aa).

10-17 (GIDGAGKS) provides a ligand contact to ATP.

This sequence belongs to the thymidylate kinase family.

It catalyses the reaction dTMP + ATP = dTDP + ADP. Phosphorylation of dTMP to form dTDP in both de novo and salvage pathways of dTTP synthesis. The polypeptide is Thymidylate kinase (Neisseria gonorrhoeae (strain ATCC 700825 / FA 1090)).